Reading from the N-terminus, the 425-residue chain is Serine--tRNA ligase (425 aa).

233 to 235 is a binding site for L-serine; that stretch reads TAE. An ATP-binding site is contributed by 264–266; sequence RRE. E287 is a binding site for L-serine. 351–354 lines the ATP pocket; the sequence is EISS. S387 provides a ligand contact to L-serine.

The protein belongs to the class-II aminoacyl-tRNA synthetase family. Type-1 seryl-tRNA synthetase subfamily. Homodimer. The tRNA molecule binds across the dimer.

Its subcellular location is the cytoplasm. It catalyses the reaction tRNA(Ser) + L-serine + ATP = L-seryl-tRNA(Ser) + AMP + diphosphate + H(+). The catalysed reaction is tRNA(Sec) + L-serine + ATP = L-seryl-tRNA(Sec) + AMP + diphosphate + H(+). The protein operates within aminoacyl-tRNA biosynthesis; selenocysteinyl-tRNA(Sec) biosynthesis; L-seryl-tRNA(Sec) from L-serine and tRNA(Sec): step 1/1. In terms of biological role, catalyzes the attachment of serine to tRNA(Ser). Is also able to aminoacylate tRNA(Sec) with serine, to form the misacylated tRNA L-seryl-tRNA(Sec), which will be further converted into selenocysteinyl-tRNA(Sec). This Thermotoga sp. (strain RQ2) protein is Serine--tRNA ligase.